The chain runs to 225 residues: UPF0758 protein XAC3915 (225 aa).

Residues 102–224 (ALSDPPSVGR…PVSFAERGWL (123 aa)) form the MPN domain. Zn(2+)-binding residues include His173, His175, and Asp186. Residues 173 to 186 (HNHPSGNPEPSEAD) carry the JAMM motif motif.

It belongs to the UPF0758 family.

The polypeptide is UPF0758 protein XAC3915 (Xanthomonas axonopodis pv. citri (strain 306)).